We begin with the raw amino-acid sequence, 234 residues long: UPF0758 protein Smlt0399 (234 aa).

One can recognise an MPN domain in the interval 103 to 225; sequence VGNNPAAVGR…PVSFAERGLL (123 aa). The Zn(2+) site is built by histidine 174, histidine 176, and aspartate 187. The JAMM motif motif lies at 174–187; that stretch reads HNHPSGDPEPSSAD.

The protein belongs to the UPF0758 family.

The sequence is that of UPF0758 protein Smlt0399 from Stenotrophomonas maltophilia (strain K279a).